The primary structure comprises 449 residues: Signal recognition particle protein (449 aa).

GTP is bound by residues 109–116, 191–195, and 249–252; these read GLQGGGKT, DTAGR, and SRID.

It belongs to the GTP-binding SRP family. SRP54 subfamily. Part of the signal recognition particle protein translocation system, which is composed of SRP and FtsY. SRP is a ribonucleoprotein composed of Ffh and a 4.5S RNA molecule.

It is found in the cytoplasm. The enzyme catalyses GTP + H2O = GDP + phosphate + H(+). Its function is as follows. Involved in targeting and insertion of nascent membrane proteins into the cytoplasmic membrane. Binds to the hydrophobic signal sequence of the ribosome-nascent chain (RNC) as it emerges from the ribosomes. The SRP-RNC complex is then targeted to the cytoplasmic membrane where it interacts with the SRP receptor FtsY. Interaction with FtsY leads to the transfer of the RNC complex to the Sec translocase for insertion into the membrane, the hydrolysis of GTP by both Ffh and FtsY, and the dissociation of the SRP-FtsY complex into the individual components. This Rickettsia prowazekii (strain Madrid E) protein is Signal recognition particle protein.